The primary structure comprises 111 residues: UPF0235 protein glr3835 (111 aa).

Belongs to the UPF0235 family.

This chain is UPF0235 protein glr3835, found in Gloeobacter violaceus (strain ATCC 29082 / PCC 7421).